The primary structure comprises 168 residues: Photosystem I assembly protein Ycf3 (168 aa).

3 TPR repeats span residues 35–68 (AFTY…EIDP), 72–105 (SYIL…NPFL), and 120–153 (GEQA…TPGN).

Belongs to the Ycf3 family.

The protein resides in the plastid. The protein localises to the chloroplast thylakoid membrane. Its function is as follows. Essential for the assembly of the photosystem I (PSI) complex. May act as a chaperone-like factor to guide the assembly of the PSI subunits. The polypeptide is Photosystem I assembly protein Ycf3 (Phalaenopsis aphrodite subsp. formosana (Moth orchid)).